The following is a 78-amino-acid chain: Translational regulator CsrA (78 aa).

It belongs to the CsrA/RsmA family. In terms of assembly, homodimer; the beta-strands of each monomer intercalate to form a hydrophobic core, while the alpha-helices form wings that extend away from the core.

It localises to the cytoplasm. A translational regulator that binds mRNA to regulate translation initiation and/or mRNA stability. Usually binds in the 5'-UTR at or near the Shine-Dalgarno sequence preventing ribosome-binding, thus repressing translation. Its main target seems to be the major flagellin gene, while its function is anatagonized by FliW. The sequence is that of Translational regulator CsrA from Nitratidesulfovibrio vulgaris (strain ATCC 29579 / DSM 644 / CCUG 34227 / NCIMB 8303 / VKM B-1760 / Hildenborough) (Desulfovibrio vulgaris).